We begin with the raw amino-acid sequence, 165 residues long: MVVAVYPGTFDPLTRGHEDLVRRASSIFDTLVVGVADSRAKKPFFSLEERLTIANEVLGHYPNVKVMSFTGLLKDFVRVNNARVIVRGLRAVSDFEYEFQMAGMNRYLLPDVETMFMTPSDQYQFISGTIVREIAQLGGDVSKFVFPSVEKWLTEKVTAMGGPAA.

Thr-9 contributes to the substrate binding site. Residues 9–10 and His-17 each bind ATP; that span reads TF. 3 residues coordinate substrate: Lys-41, Leu-73, and Arg-87. ATP-binding positions include 88 to 90, Glu-98, and 123 to 129; these read GLR and YQFISGT.

The protein belongs to the bacterial CoaD family. In terms of assembly, homohexamer. Mg(2+) serves as cofactor.

The protein resides in the cytoplasm. The enzyme catalyses (R)-4'-phosphopantetheine + ATP + H(+) = 3'-dephospho-CoA + diphosphate. It functions in the pathway cofactor biosynthesis; coenzyme A biosynthesis; CoA from (R)-pantothenate: step 4/5. In terms of biological role, reversibly transfers an adenylyl group from ATP to 4'-phosphopantetheine, yielding dephospho-CoA (dPCoA) and pyrophosphate. The polypeptide is Phosphopantetheine adenylyltransferase (Burkholderia orbicola (strain MC0-3)).